Reading from the N-terminus, the 426-residue chain is Serine--tRNA ligase (426 aa).

An L-serine-binding site is contributed by 233–235 (TAE). An ATP-binding site is contributed by 264 to 266 (RSE). Residue Glu287 participates in L-serine binding. 351–354 (EISS) lines the ATP pocket. Ser387 lines the L-serine pocket.

Belongs to the class-II aminoacyl-tRNA synthetase family. Type-1 seryl-tRNA synthetase subfamily. As to quaternary structure, homodimer. The tRNA molecule binds across the dimer.

Its subcellular location is the cytoplasm. It catalyses the reaction tRNA(Ser) + L-serine + ATP = L-seryl-tRNA(Ser) + AMP + diphosphate + H(+). It carries out the reaction tRNA(Sec) + L-serine + ATP = L-seryl-tRNA(Sec) + AMP + diphosphate + H(+). It participates in aminoacyl-tRNA biosynthesis; selenocysteinyl-tRNA(Sec) biosynthesis; L-seryl-tRNA(Sec) from L-serine and tRNA(Sec): step 1/1. Catalyzes the attachment of serine to tRNA(Ser). Is also able to aminoacylate tRNA(Sec) with serine, to form the misacylated tRNA L-seryl-tRNA(Sec), which will be further converted into selenocysteinyl-tRNA(Sec). This is Serine--tRNA ligase from Francisella philomiragia subsp. philomiragia (strain ATCC 25017 / CCUG 19701 / FSC 153 / O#319-036).